Here is a 172-residue protein sequence, read N- to C-terminus: Photosystem I assembly protein Ycf3 (172 aa).

3 TPR repeats span residues 35-70 (AFTYYRDGAIMSAQSEGNYAEALQNYYEATRSEIDP), 74-107 (SYILYNIGLIHTSNGEHTKALEYYFQAIERNPFL), and 122-155 (GERAILRGDSEIAEAWFDQAAEYWKQAIGLTPGN).

This sequence belongs to the Ycf3 family.

It is found in the plastid. It localises to the chloroplast thylakoid membrane. Its function is as follows. Essential for the assembly of the photosystem I (PSI) complex. May act as a chaperone-like factor to guide the assembly of the PSI subunits. This is Photosystem I assembly protein Ycf3 from Dioscorea elephantipes (Elephant's foot yam).